We begin with the raw amino-acid sequence, 94 residues long: Putative FXYD domain-containing ion transport regulator 8 (94 aa).

An N-terminal signal peptide occupies residues 1-18; that stretch reads MEVVLIFVYSLLVPVVLA. Topologically, residues 19-34 are extracellular; that stretch reads SAAKEKEIDPFHYNYQ. The chain crosses the membrane as a helical span at residues 35 to 58; the sequence is TLRIGGLVFDVVLFLVPSCHLLSH. Residues 59–94 are Cytoplasmic-facing; the sequence is RCKCSFNQKPQDPGDKEAQVENFITANAKEPQKAKN. The tract at residues 66–94 is disordered; it reads QKPQDPGDKEAQVENFITANAKEPQKAKN.

Belongs to the FXYD family.

Its subcellular location is the membrane. This Homo sapiens (Human) protein is Putative FXYD domain-containing ion transport regulator 8 (FXYD6P3).